A 459-amino-acid chain; its full sequence is Vasoactive intestinal polypeptide receptor 1 (459 aa).

An N-terminal signal peptide occupies residues 1-30 (MRPPSLPPARWLCVLAGALACALGPAGSRA). Residues 31–142 (ASPHQECEYL…EQQQTEFYDA (112 aa)) lie on the Extracellular side of the membrane. 5 disulfides stabilise this stretch: cysteine 37-cysteine 209, cysteine 50-cysteine 72, cysteine 63-cysteine 105, cysteine 86-cysteine 122, and cysteine 216-cysteine 286. N-linked (GlcNAc...) asparagine glycosylation is found at asparagine 58, asparagine 69, asparagine 100, and asparagine 104. The chain crosses the membrane as a helical span at residues 143–167 (VKTGYTIGYSLSLASLLVAMAILSL). At 168–175 (FRKLHCTR) the chain is on the cytoplasmic side. Residues 176–197 (NYIHMHLFMSFILRATAVFIKD) traverse the membrane as a helical segment. Topologically, residues 198–217 (MALFNNGETDHCSEASVSCK) are extracellular. A helical transmembrane segment spans residues 218–242 (AAVVFFQYCVMANFFWLLVEGLYLH). The Cytoplasmic segment spans residues 243–255 (TLLAVSFFSERKY). Residues 256–277 (FWGYILIGWGVPSVFIMIWTIV) form a helical membrane-spanning segment. Residues 278–293 (RIHFEDFGCWDTIINS) lie on the Extracellular side of the membrane. Asparagine 292 carries an N-linked (GlcNAc...) asparagine glycan. A helical transmembrane segment spans residues 294 to 318 (SLWWIIKGPILISILVNFILFICII). Over 319–340 (RILVQKLRPPDIGKNDSSPYSR) the chain is Cytoplasmic. The helical transmembrane segment at 341–361 (LAKSTLLLIPLFGVHYVMFAF) threads the bilayer. Over 362 to 369 (FPDNFKAQ) the chain is Extracellular. A helical membrane pass occupies residues 370–393 (VKMVFELVVGSFQGFVVAILYCFL). The Cytoplasmic segment spans residues 394–459 (NGEVQAELRR…SSFQAEVSLV (66 aa)).

It belongs to the G-protein coupled receptor 2 family. Interacts with ADCYAP1/PACAP; activated by both PACAP27 and PACAP38 neuropeptides. Interacts with VIP; the interaction results in VIPR1 activation.

It is found in the cell membrane. Functionally, g protein-coupled receptor activated by the neuropeptides vasoactive intestinal peptide (VIP) and pituitary adenylate cyclase-activating polypeptide (ADCYAP1/PACAP). Binds VIP and both PACAP27 and PACAP38 bioactive peptides with the following order of ligand affinity VIP = PACAP27 &gt; PACAP38. Ligand binding causes a conformation change that triggers signaling via guanine nucleotide-binding proteins (G proteins) and modulates the activity of downstream effectors. Activates cAMP-dependent pathway. The polypeptide is Vasoactive intestinal polypeptide receptor 1 (Mus musculus (Mouse)).